The following is a 505-amino-acid chain: Lysine--tRNA ligase (505 aa).

Mg(2+) contacts are provided by Glu415 and Glu422.

The protein belongs to the class-II aminoacyl-tRNA synthetase family. As to quaternary structure, homodimer. The cofactor is Mg(2+).

The protein resides in the cytoplasm. It carries out the reaction tRNA(Lys) + L-lysine + ATP = L-lysyl-tRNA(Lys) + AMP + diphosphate. The polypeptide is Lysine--tRNA ligase (Enterobacter sp. (strain 638)).